The following is a 309-amino-acid chain: Glutaminase (309 aa).

Positions 64, 114, 160, 167, 191, 243, and 261 each coordinate substrate.

It belongs to the glutaminase family. In terms of assembly, homotetramer.

The enzyme catalyses L-glutamine + H2O = L-glutamate + NH4(+). The chain is Glutaminase from Methylobacterium radiotolerans (strain ATCC 27329 / DSM 1819 / JCM 2831 / NBRC 15690 / NCIMB 10815 / 0-1).